The primary structure comprises 824 residues: Leucine--tRNA ligase (824 aa).

Positions 42-52 (PYPSGKIHMGH) match the 'HIGH' region motif. Positions 581-585 (KMSKS) match the 'KMSKS' region motif. Lys584 lines the ATP pocket.

Belongs to the class-I aminoacyl-tRNA synthetase family.

It is found in the cytoplasm. The catalysed reaction is tRNA(Leu) + L-leucine + ATP = L-leucyl-tRNA(Leu) + AMP + diphosphate. The chain is Leucine--tRNA ligase from Citrifermentans bemidjiense (strain ATCC BAA-1014 / DSM 16622 / JCM 12645 / Bem) (Geobacter bemidjiensis).